The sequence spans 236 residues: Orotidine 5'-phosphate decarboxylase (236 aa).

Substrate-binding positions include Asp-14, Lys-36, 63-72 (DLKFHDIPNT), Thr-122, Arg-183, Gln-192, Gly-212, and Arg-213. Lys-65 serves as the catalytic Proton donor.

It belongs to the OMP decarboxylase family. Type 1 subfamily. In terms of assembly, homodimer.

The enzyme catalyses orotidine 5'-phosphate + H(+) = UMP + CO2. It participates in pyrimidine metabolism; UMP biosynthesis via de novo pathway; UMP from orotate: step 2/2. In terms of biological role, catalyzes the decarboxylation of orotidine 5'-monophosphate (OMP) to uridine 5'-monophosphate (UMP). The sequence is that of Orotidine 5'-phosphate decarboxylase from Chromohalobacter salexigens (strain ATCC BAA-138 / DSM 3043 / CIP 106854 / NCIMB 13768 / 1H11).